A 367-amino-acid chain; its full sequence is Flagellin 2 (367 aa).

The protein belongs to the bacterial flagellin family.

Its subcellular location is the secreted. It is found in the bacterial flagellum. Functionally, flagellin is the subunit protein which polymerizes to form the filaments of bacterial flagella. The polypeptide is Flagellin 2 (fliC2) (Proteus mirabilis).